A 419-amino-acid chain; its full sequence is C2 calcium-dependent domain-containing protein 4C (419 aa).

Disordered stretches follow at residues 1–96, 115–136, 151–225, and 247–300; these read MRKT…LASE, EDWTAEEATNADPQAQGAMSLP, AESP…SPFG, and VSQL…HTVK. Positions 75-94 are enriched in low complexity; it reads LASPGPRRAPRSPRLPAKLA. The segment covering 186 to 196 has biased composition (gly residues); the sequence is KGNGGDGGSRE. Residues 212–225 are compositionally biased toward polar residues; sequence ESDTGSSAESSPFG. 3 positions are modified to phosphoserine: S259, S261, and S270. Residues 303–419 form the C2 domain; sequence TRGSVRLLAE…LPLTSLLPFL (117 aa).

It belongs to the C2CD4 family.

In Mus musculus (Mouse), this protein is C2 calcium-dependent domain-containing protein 4C (C2cd4c).